The chain runs to 287 residues: tRNA uridine(34) hydroxylase (287 aa).

Positions 132 to 226 (EGRPVVMLDT…YFEEVGGAHY (95 aa)) constitute a Rhodanese domain. The active-site Cysteine persulfide intermediate is the C186.

The protein belongs to the TrhO family.

The catalysed reaction is uridine(34) in tRNA + AH2 + O2 = 5-hydroxyuridine(34) in tRNA + A + H2O. Functionally, catalyzes oxygen-dependent 5-hydroxyuridine (ho5U) modification at position 34 in tRNAs. In Paraburkholderia xenovorans (strain LB400), this protein is tRNA uridine(34) hydroxylase.